Reading from the N-terminus, the 84-residue chain is Large ribosomal subunit protein bL31B (84 aa).

It belongs to the bacterial ribosomal protein bL31 family. Type B subfamily. In terms of assembly, part of the 50S ribosomal subunit.

This chain is Large ribosomal subunit protein bL31B, found in Bacteroides thetaiotaomicron (strain ATCC 29148 / DSM 2079 / JCM 5827 / CCUG 10774 / NCTC 10582 / VPI-5482 / E50).